The primary structure comprises 601 residues: MARANRGEHSTLSTFWQSRHNAASFDPLYRRIDVNAPEPSDSATPEKTPSKHFIRQAIDADLASGRFDGVATRFPPEPNGYLHIGHAKSICLNFGLAKDMGGTCNLRFDDTNPIKEDTEYVDSIQEDVRWLGFEWDNLHFASDYFDQLYDWAEQLVKDGKAYVCDLTAEETREYRGTLTEPGKNSPHRDRTPEKNLELLRAMKAGKFKDGEKTLRAKIDMASPNINLRDPVMYRIAHVPHHRTGDKWCIYPMYDWAHGQSDSLEKITFSICTLEFEHHRPLYNWYCENLGIHHPRQIEFARLNMTFTVMSKRKLLQLVKENHVTGWDDPRMPTLVGLRRRGYTPESIRSFCADIGVAKFNSTIDVIRLENSVREHLNSVAPRRMAVLDPIKLTITNWPEGKVEMMNAINNPEDESAGSREIPFSGELYIETEDFREEAPRKFFRLKKGGSVRLRSGYIVDCHDVVKDADGNVTEVLCTYDPETKSGEDTSGRKVKGTIHWVSREHAQKVTVRNYDRLFKVENPDASSDTGSFLDHLNPDSLTTLTAHVEPALAEAAVGDRVQFERLGYYVVDPDSTDGEIIFNRIVPLRDTWGKIEAKGKK.

The short motif at 76–86 is the 'HIGH' region element; that stretch reads PEPNGYLHIGH. Residues 77-79 and 83-89 contribute to the ATP site; these read EPN and HIGHAKS. L-glutamine is bound by residues Asp-109 and Tyr-253. Residues Thr-272, 301–302, and 309–311 each bind ATP; these read RL and MSK. Positions 308 to 312 match the 'KMSKS' region motif; it reads VMSKR.

Belongs to the class-I aminoacyl-tRNA synthetase family. Monomer.

Its subcellular location is the cytoplasm. It carries out the reaction tRNA(Gln) + L-glutamine + ATP = L-glutaminyl-tRNA(Gln) + AMP + diphosphate. This chain is Glutamine--tRNA ligase, found in Rhodopirellula baltica (strain DSM 10527 / NCIMB 13988 / SH1).